The chain runs to 835 residues: Serine/threonine-protein kinase TNNI3K (835 aa).

Residue Gly2 is the site of N-myristoyl glycine attachment. A coiled-coil region spans residues 21–50; sequence SESYAIIIERLEDNLQIKENEFQELRHIFG. 10 ANK repeats span residues 66–96, 100–129, 133–162, 166–195, 199–228, 234–263, 269–298, 304–335, 339–368, and 381–410; these read RGLSLLHLCCVCGGNKSHIRALMLKGLRPSR, NGFPALHLAVYKDSPELITSLLHSGADVQQ, GGLTALHIAAIAGHPEAAEVLLQHGANVNV, VFFTPLHIAAYYGHEQVTSVLLKFGADVNV, VGDRPLHLASAKGFFNIVKLLVEEGSKADV, EDHVPLHFCSRFGHHNIVSYLLQSDLEVQP, YGDTPLHLACYNGNFEVAKEIVQVTGTESL, FSETAFHSACTYGKNIDLVKFLLDQNAVNINH, DGHTGLHSACYHGHIRLVQFLLDNGADMNL, and DEQTCLMWAYEKGHDAIVTLLKHYKRPQEE. One can recognise a Protein kinase domain in the interval 463–723; the sequence is IEFHEIIGSG…EVVSKLEECL (261 aa). Residues 469 to 477 and Lys490 each bind ATP; that span reads IGSGSFGKV. Asp588 acts as the Proton acceptor in catalysis.

This sequence belongs to the protein kinase superfamily. TKL Ser/Thr protein kinase family. MAP kinase kinase kinase subfamily. In terms of assembly, interacts with TNNI3, ACTC, ACTA1, MYBPC3, AIP, FABP3 and HADHB. Requires Mg(2+) as cofactor. Post-translationally, autophosphorylated.

The protein resides in the nucleus. It localises to the cytoplasm. It catalyses the reaction L-seryl-[protein] + ATP = O-phospho-L-seryl-[protein] + ADP + H(+). The enzyme catalyses L-threonyl-[protein] + ATP = O-phospho-L-threonyl-[protein] + ADP + H(+). Functionally, may play a role in cardiac physiology. The protein is Serine/threonine-protein kinase TNNI3K of Rattus norvegicus (Rat).